Reading from the N-terminus, the 545-residue chain is Threonine--tRNA ligase catalytic subunit (545 aa).

The catalytic stretch occupies residues 139 to 433 (DHRLIGEKLD…LLEHFKGKLP (295 aa)). 3 residues coordinate Zn(2+): Cys-231, His-282, and His-410.

This sequence belongs to the class-II aminoacyl-tRNA synthetase family. As to quaternary structure, homodimer. Probably interacts with its editing subunit. Zn(2+) serves as cofactor.

It localises to the cytoplasm. It carries out the reaction tRNA(Thr) + L-threonine + ATP = L-threonyl-tRNA(Thr) + AMP + diphosphate + H(+). Functionally, catalyzes the attachment of threonine to tRNA(Thr) in a two-step reaction: L-threonine is first activated by ATP to form Thr-AMP and then transferred to the acceptor end of tRNA(Thr). Also activates L-serine and transfers it to tRNA(Thr) but cannot deacylate incorrectly charged amino acid; unlike most archaea the editing function is found in a freestanding protein. The polypeptide is Threonine--tRNA ligase catalytic subunit (Saccharolobus islandicus (strain M.16.27) (Sulfolobus islandicus)).